The sequence spans 179 residues: MAELATIARPYAEALFRVAEGGDIAAWSTLVQELAQVARLPEVLSVASSPKVTRAQVAELLLAALKSPLAAGAEAKNFVQMLVDNHRIALLPEIAEQFEALKNEREGAADAEIVSAFPLDGADLDSLVASLERKFKRKLKPTVEVDSSLIGGVRVTVGDEVLDTSVRARLASMQAALTA.

Belongs to the ATPase delta chain family. In terms of assembly, F-type ATPases have 2 components, F(1) - the catalytic core - and F(0) - the membrane proton channel. F(1) has five subunits: alpha(3), beta(3), gamma(1), delta(1), epsilon(1). F(0) has three main subunits: a(1), b(2) and c(10-14). The alpha and beta chains form an alternating ring which encloses part of the gamma chain. F(1) is attached to F(0) by a central stalk formed by the gamma and epsilon chains, while a peripheral stalk is formed by the delta and b chains.

Its subcellular location is the cell inner membrane. Its function is as follows. F(1)F(0) ATP synthase produces ATP from ADP in the presence of a proton or sodium gradient. F-type ATPases consist of two structural domains, F(1) containing the extramembraneous catalytic core and F(0) containing the membrane proton channel, linked together by a central stalk and a peripheral stalk. During catalysis, ATP synthesis in the catalytic domain of F(1) is coupled via a rotary mechanism of the central stalk subunits to proton translocation. This protein is part of the stalk that links CF(0) to CF(1). It either transmits conformational changes from CF(0) to CF(1) or is implicated in proton conduction. In Burkholderia multivorans (strain ATCC 17616 / 249), this protein is ATP synthase subunit delta.